The primary structure comprises 481 residues: DNA gyrase subunit B (481 aa).

Residues 323-442 (CELYLVEGDS…QGYVYIAQPP (120 aa)) enclose the Toprim domain. 3 residues coordinate Mg(2+): Glu-329, Asp-407, and Asp-409.

This sequence belongs to the type II topoisomerase GyrB family. Heterotetramer, composed of two GyrA and two GyrB chains. In the heterotetramer, GyrA contains the active site tyrosine that forms a transient covalent intermediate with DNA, while GyrB binds cofactors and catalyzes ATP hydrolysis. It depends on Mg(2+) as a cofactor. The cofactor is Mn(2+). Requires Ca(2+) as cofactor.

It localises to the cytoplasm. It carries out the reaction ATP-dependent breakage, passage and rejoining of double-stranded DNA.. A type II topoisomerase that negatively supercoils closed circular double-stranded (ds) DNA in an ATP-dependent manner to modulate DNA topology and maintain chromosomes in an underwound state. Negative supercoiling favors strand separation, and DNA replication, transcription, recombination and repair, all of which involve strand separation. Also able to catalyze the interconversion of other topological isomers of dsDNA rings, including catenanes and knotted rings. Type II topoisomerases break and join 2 DNA strands simultaneously in an ATP-dependent manner. The polypeptide is DNA gyrase subunit B (gyrB) (Chitinophaga japonensis (Flexibacter japonensis)).